Here is a 159-residue protein sequence, read N- to C-terminus: Ribosomal RNA large subunit methyltransferase H (159 aa).

S-adenosyl-L-methionine-binding positions include Leu-76, Gly-108, and 127 to 132 (FGLLTL).

The protein belongs to the RNA methyltransferase RlmH family. In terms of assembly, homodimer.

The protein localises to the cytoplasm. The catalysed reaction is pseudouridine(1915) in 23S rRNA + S-adenosyl-L-methionine = N(3)-methylpseudouridine(1915) in 23S rRNA + S-adenosyl-L-homocysteine + H(+). Specifically methylates the pseudouridine at position 1915 (m3Psi1915) in 23S rRNA. This Streptococcus pyogenes serotype M3 (strain SSI-1) protein is Ribosomal RNA large subunit methyltransferase H.